Consider the following 274-residue polypeptide: Glutamate racemase (274 aa).

Residues 9–10 (DS) and 41–42 (YG) each bind substrate. Cysteine 73 serves as the catalytic Proton donor/acceptor. 74 to 75 (NT) contributes to the substrate binding site. Residue cysteine 183 is the Proton donor/acceptor of the active site. Residue 184–185 (TH) coordinates substrate.

Belongs to the aspartate/glutamate racemases family.

The catalysed reaction is L-glutamate = D-glutamate. Its pathway is cell wall biogenesis; peptidoglycan biosynthesis. Provides the (R)-glutamate required for cell wall biosynthesis. The protein is Glutamate racemase of Shewanella baltica (strain OS195).